We begin with the raw amino-acid sequence, 412 residues long: Short-chain specific acyl-CoA dehydrogenase, mitochondrial (412 aa).

A mitochondrion-targeting transit peptide spans 1–24 (MAAALLARARGPLRRALGVRDWRR). Threonine 27 is modified (phosphothreonine). Lysine 51 bears the N6-acetyllysine; alternate mark. Position 51 is an N6-succinyllysine; alternate (lysine 51). N6-acetyllysine is present on lysine 72. At lysine 129 the chain carries N6-acetyllysine; alternate. Lysine 129 is modified (N6-succinyllysine; alternate). FAD is bound by residues 152-161 (FALSEPGNGS) and 185-187 (WIT). Serine 161 is a binding site for substrate. Lysine 208 carries the post-translational modification N6-acetyllysine. An N6-acetyllysine; alternate modification is found at lysine 262. Position 262 is an N6-succinyllysine; alternate (lysine 262). 269-272 (DMGR) serves as a coordination point for substrate. Position 292 is an N6-acetyllysine (lysine 292). Arginine 297 contributes to the FAD binding site. At lysine 306 the chain carries N6-acetyllysine; alternate. Lysine 306 is modified (N6-succinyllysine; alternate). Residues glutamine 308 and 365–369 (QILGG) contribute to the FAD site. The Proton acceptor role is filled by glutamate 392. Substrate is bound at residue glycine 393. FAD is bound at residue 394-396 (TSE).

This sequence belongs to the acyl-CoA dehydrogenase family. As to quaternary structure, homotetramer. FAD serves as cofactor.

The protein localises to the mitochondrion matrix. It carries out the reaction a short-chain 2,3-saturated fatty acyl-CoA + oxidized [electron-transfer flavoprotein] + H(+) = a short-chain (2E)-enoyl-CoA + reduced [electron-transfer flavoprotein]. The enzyme catalyses butanoyl-CoA + oxidized [electron-transfer flavoprotein] + H(+) = (2E)-butenoyl-CoA + reduced [electron-transfer flavoprotein]. The catalysed reaction is pentanoyl-CoA + oxidized [electron-transfer flavoprotein] + H(+) = (2E)-pentenoyl-CoA + reduced [electron-transfer flavoprotein]. It catalyses the reaction hexanoyl-CoA + oxidized [electron-transfer flavoprotein] + H(+) = (2E)-hexenoyl-CoA + reduced [electron-transfer flavoprotein]. It functions in the pathway lipid metabolism; mitochondrial fatty acid beta-oxidation. In terms of biological role, short-chain specific acyl-CoA dehydrogenase is one of the acyl-CoA dehydrogenases that catalyze the first step of mitochondrial fatty acid beta-oxidation, an aerobic process breaking down fatty acids into acetyl-CoA and allowing the production of energy from fats. The first step of fatty acid beta-oxidation consists in the removal of one hydrogen from C-2 and C-3 of the straight-chain fatty acyl-CoA thioester, resulting in the formation of trans-2-enoyl-CoA. Among the different mitochondrial acyl-CoA dehydrogenases, short-chain specific acyl-CoA dehydrogenase acts specifically on acyl-CoAs with saturated 4 to 6 carbons long primary chains. This chain is Short-chain specific acyl-CoA dehydrogenase, mitochondrial (Acads), found in Mus musculus (Mouse).